The sequence spans 501 residues: UPF0288 protein Maeo_0995 (501 aa).

It belongs to the UPF0288 family.

In Methanococcus aeolicus (strain ATCC BAA-1280 / DSM 17508 / OCM 812 / Nankai-3), this protein is UPF0288 protein Maeo_0995.